The chain runs to 975 residues: Glycine dehydrogenase (decarboxylating) (975 aa).

The residue at position 723 (K723) is an N6-(pyridoxal phosphate)lysine.

The protein belongs to the GcvP family. As to quaternary structure, the glycine cleavage system is composed of four proteins: P, T, L and H. Pyridoxal 5'-phosphate is required as a cofactor.

It catalyses the reaction N(6)-[(R)-lipoyl]-L-lysyl-[glycine-cleavage complex H protein] + glycine + H(+) = N(6)-[(R)-S(8)-aminomethyldihydrolipoyl]-L-lysyl-[glycine-cleavage complex H protein] + CO2. Functionally, the glycine cleavage system catalyzes the degradation of glycine. The P protein binds the alpha-amino group of glycine through its pyridoxal phosphate cofactor; CO(2) is released and the remaining methylamine moiety is then transferred to the lipoamide cofactor of the H protein. The polypeptide is Glycine dehydrogenase (decarboxylating) (Burkholderia orbicola (strain MC0-3)).